A 724-amino-acid polypeptide reads, in one-letter code: Propionyl-CoA carboxylase alpha chain, mitochondrial (724 aa).

The transit peptide at 1–48 (MAGQWVRTVALLAARRHWRRSSQQQLLGTLKHAPVYSYQCLVVSRSLS) directs the protein to the mitochondrion. The Biotin carboxylation domain maps to 58 to 505 (TFDKILIANR…STKFLSDVYP (448 aa)). At Lys-61 the chain carries N6-acetyllysine; alternate. N6-succinyllysine; alternate is present on Lys-61. Lys-115 carries the post-translational modification N6-succinyllysine. Lys-146 carries the post-translational modification N6-acetyllysine; alternate. Residue Lys-146 is modified to N6-succinyllysine; alternate. Position 150 is an N6-acetyllysine (Lys-150). Lys-173 is a binding site for ATP. Positions 177–374 (KLLAKRAKVN…LVQEMILVAK (198 aa)) constitute an ATP-grasp domain. An N6-succinyllysine modification is found at Lys-184. Lys-196 carries the N6-acetyllysine; alternate modification. At Lys-196 the chain carries N6-succinyllysine; alternate. ATP is bound by residues 205–266 (AREI…PRHI), Glu-257, and Asn-292. Ser-248 is subject to Phosphoserine. The residue at position 258 (Lys-258) is an N6-succinyllysine. Position 324 is an N6-acetyllysine; alternate (Lys-324). The residue at position 324 (Lys-324) is an N6-succinyllysine; alternate. Residues Glu-332, Glu-345, and Asn-347 each contribute to the Mg(2+) site. The Mn(2+) site is built by Glu-332, Glu-345, and Asn-347. The active site involves Arg-349. 2 positions are modified to N6-succinyllysine: Lys-381 and Lys-403. Phe-405 lines the biotin pocket. An N6-acetyllysine modification is found at Lys-492. N6-succinyllysine is present on residues Lys-498, Lys-509, Lys-554, and Lys-644. The Biotinyl-binding domain occupies 645–724 (FMLEKVPKDT…GEGDLLVELE (80 aa)). Lys-690 carries the post-translational modification N6-biotinyllysine; by HLCS.

As to quaternary structure, the holoenzyme is a dodecamer composed of 6 PCCA/alpha subunits and 6 PCCB/beta subunits. Interacts (via the biotin carboxylation domain) with SIRT4. Interacts with SIRT3 and SIRT5. It depends on Mg(2+) as a cofactor. Mn(2+) is required as a cofactor. Biotin serves as cofactor. Post-translationally, acetylated. In terms of processing, the biotin cofactor is covalently attached to the C-terminal biotinyl-binding domain and is required for the catalytic activity. Biotinylation is catalyzed by HLCS.

The protein localises to the mitochondrion matrix. The catalysed reaction is propanoyl-CoA + hydrogencarbonate + ATP = (S)-methylmalonyl-CoA + ADP + phosphate + H(+). It catalyses the reaction butanoyl-CoA + hydrogencarbonate + ATP = (2S)-ethylmalonyl-CoA + ADP + phosphate + H(+). It participates in metabolic intermediate metabolism; propanoyl-CoA degradation; succinyl-CoA from propanoyl-CoA: step 1/3. Functionally, this is one of the 2 subunits of the biotin-dependent propionyl-CoA carboxylase (PCC), a mitochondrial enzyme involved in the catabolism of odd chain fatty acids, branched-chain amino acids isoleucine, threonine, methionine, and valine and other metabolites. Propionyl-CoA carboxylase catalyzes the carboxylation of propionyl-CoA/propanoyl-CoA to D-methylmalonyl-CoA/(S)-methylmalonyl-CoA. Within the holoenzyme, the alpha subunit catalyzes the ATP-dependent carboxylation of the biotin carried by the biotin carboxyl carrier (BCC) domain, while the beta subunit then transfers the carboxyl group from carboxylated biotin to propionyl-CoA. Propionyl-CoA carboxylase also significantly acts on butyryl-CoA/butanoyl-CoA, which is converted to ethylmalonyl-CoA/(2S)-ethylmalonyl-CoA. Other alternative minor substrates include (2E)-butenoyl-CoA/crotonoyl-CoA. The sequence is that of Propionyl-CoA carboxylase alpha chain, mitochondrial from Mus musculus (Mouse).